Here is a 204-residue protein sequence, read N- to C-terminus: MQSYASAMLSVFNTDGYSPAAQQNIPALRRSSSFICTESCSSKYQCEAGENSKGSVQDKVKRPMNAFIVWSRDQKRKMALENPKMRNSEISKQLGYQWKMLTEADKWPFFQEAQKLQAMHREKYPNYKYRPRRKAKMLQNSCSLLPADPSSVPCREVQLDNRLYRDDCTKATHSRMQHQLGHLPPINTASSPQQRDRYSHSTKL.

The HMG box DNA-binding region spans 60 to 128; the sequence is VKRPMNAFIV…MHREKYPNYK (69 aa). The segment at 175 to 204 is disordered; sequence RMQHQLGHLPPINTASSPQQRDRYSHSTKL. Basic and acidic residues predominate over residues 194–204; that stretch reads QRDRYSHSTKL.

The protein belongs to the SRY family. As to quaternary structure, interacts with CALM, EP300, HDAC3, KPNB1, ZNF208 isoform KRAB-O, PARP1, SLC9A3R2 and WT1. The interaction with EP300 modulates its DNA-binding activity. The interaction with KPNB1 is sensitive to dissociation by Ran in the GTP-bound form. Interaction with PARP1 impaired its DNA-binding activity. In terms of processing, acetylation of Lys-136 contributes to its nuclear localization and enhances its interaction with KPNB1. Deacetylated by HDAC3.

The protein resides in the nucleus speckle. It localises to the cytoplasm. It is found in the nucleus. Its function is as follows. Transcriptional regulator that controls a genetic switch in male development. It is necessary and sufficient for initiating male sex determination by directing the development of supporting cell precursors (pre-Sertoli cells) as Sertoli rather than granulosa cells. Involved in different aspects of gene regulation including promoter activation or repression. Binds to the DNA consensus sequence 5'-[AT]AACAA[AT]-3'. SRY HMG box recognizes DNA by partial intercalation in the minor groove and promotes DNA bending. Also involved in pre-mRNA splicing. In male adult brain involved in the maintenance of motor functions of dopaminergic neurons. The chain is Sex-determining region Y protein (SRY) from Macaca mulatta (Rhesus macaque).